Here is a 400-residue protein sequence, read N- to C-terminus: Ribosomal RNA large subunit methyltransferase I (400 aa).

In terms of domain architecture, PUA spans 6–84 (FPRLVLAKGR…NEAIDSAFFE (79 aa)).

This sequence belongs to the methyltransferase superfamily. RlmI family.

The protein localises to the cytoplasm. The catalysed reaction is cytidine(1962) in 23S rRNA + S-adenosyl-L-methionine = 5-methylcytidine(1962) in 23S rRNA + S-adenosyl-L-homocysteine + H(+). Functionally, specifically methylates the cytosine at position 1962 (m5C1962) of 23S rRNA. The sequence is that of Ribosomal RNA large subunit methyltransferase I from Klebsiella pneumoniae (strain 342).